Reading from the N-terminus, the 792-residue chain is Ribonucleoside-diphosphate reductase large subunit (792 aa).

The ATP-cone domain occupies 1–92; that stretch reads MHVIKRDGRQ…VSNLHKETKK (92 aa). ATP is bound by residues 5-6, 11-17, threonine 53, and aspartate 57; these read KR and ERVMFDK. Lysine 17 carries the N6-acetyllysine modification. GDP is bound by residues serine 202 and serine 217. A disulfide bond links cysteine 218 and cysteine 444. DTTP-binding positions include 226–228, lysine 243, arginine 256, and 263–264; these read DSI and AG. Lysine 376 carries the N6-acetyllysine modification. Asparagine 427 lines the GDP pocket. Asparagine 427 serves as the catalytic Proton acceptor. Cysteine 429 functions as the Cysteine radical intermediate in the catalytic mechanism. GDP is bound by residues glutamate 431 and 604–607; that span reads TAST. Residue glutamate 431 is the Proton acceptor of the active site. A Phosphothreonine modification is found at threonine 751.

The protein belongs to the ribonucleoside diphosphate reductase large chain family. As to quaternary structure, heterodimer of a large and a small subunit. Interacts with RRM2B. Interacts with AHCYL1 which inhibits its activity.

It is found in the cytoplasm. It carries out the reaction a 2'-deoxyribonucleoside 5'-diphosphate + [thioredoxin]-disulfide + H2O = a ribonucleoside 5'-diphosphate + [thioredoxin]-dithiol. Under complex allosteric control mediated by deoxynucleoside triphosphates and ATP binding to separate specificity and activation sites on the M1 subunit. The type of nucleotide bound at the specificity site determines substrate preference. It seems probable that ATP makes the enzyme reduce CDP and UDP, dGTP favors ADP reduction and dTTP favors GDP reduction. Stimulated by ATP and inhibited by dATP binding to the activity site, the dATP inhibition is mediated by AHCYL1 which stabilizes dATP in the site. Provides the precursors necessary for DNA synthesis. Catalyzes the biosynthesis of deoxyribonucleotides from the corresponding ribonucleotides. This Mus musculus (Mouse) protein is Ribonucleoside-diphosphate reductase large subunit (Rrm1).